Here is a 542-residue protein sequence, read N- to C-terminus: Chaperonin GroEL 3 (542 aa).

Residues 30–33 (TLGP), Lys-51, 87–91 (DGTTT), Gly-415, and Asp-496 contribute to the ATP site.

This sequence belongs to the chaperonin (HSP60) family. Forms a cylinder of 14 subunits composed of two heptameric rings stacked back-to-back. Interacts with the co-chaperonin GroES.

It is found in the cytoplasm. It catalyses the reaction ATP + H2O + a folded polypeptide = ADP + phosphate + an unfolded polypeptide.. Functionally, together with its co-chaperonin GroES, plays an essential role in assisting protein folding. The GroEL-GroES system forms a nano-cage that allows encapsulation of the non-native substrate proteins and provides a physical environment optimized to promote and accelerate protein folding. The sequence is that of Chaperonin GroEL 3 from Rhizobium johnstonii (strain DSM 114642 / LMG 32736 / 3841) (Rhizobium leguminosarum bv. viciae).